The sequence spans 335 residues: Fructose-1,6-bisphosphatase class 1 (335 aa).

Mg(2+) contacts are provided by glutamate 89, aspartate 112, leucine 114, and aspartate 115. Residues 115 to 118 (DGSS), asparagine 208, tyrosine 241, and lysine 271 contribute to the substrate site. Glutamate 277 is a binding site for Mg(2+).

The protein belongs to the FBPase class 1 family. As to quaternary structure, homotetramer. It depends on Mg(2+) as a cofactor.

The protein localises to the cytoplasm. The enzyme catalyses beta-D-fructose 1,6-bisphosphate + H2O = beta-D-fructose 6-phosphate + phosphate. Its pathway is carbohydrate biosynthesis; gluconeogenesis. In Proteus mirabilis (strain HI4320), this protein is Fructose-1,6-bisphosphatase class 1.